The sequence spans 612 residues: Dihydroxy-acid dehydratase (612 aa).

Position 81 (aspartate 81) interacts with Mg(2+). Cysteine 122 contacts [2Fe-2S] cluster. Mg(2+) contacts are provided by aspartate 123 and lysine 124. Lysine 124 is modified (N6-carboxylysine). Position 195 (cysteine 195) interacts with [2Fe-2S] cluster. A Mg(2+)-binding site is contributed by glutamate 491. Residue serine 517 is the Proton acceptor of the active site.

This sequence belongs to the IlvD/Edd family. Homodimer. [2Fe-2S] cluster serves as cofactor. It depends on Mg(2+) as a cofactor.

The catalysed reaction is (2R)-2,3-dihydroxy-3-methylbutanoate = 3-methyl-2-oxobutanoate + H2O. It catalyses the reaction (2R,3R)-2,3-dihydroxy-3-methylpentanoate = (S)-3-methyl-2-oxopentanoate + H2O. It functions in the pathway amino-acid biosynthesis; L-isoleucine biosynthesis; L-isoleucine from 2-oxobutanoate: step 3/4. Its pathway is amino-acid biosynthesis; L-valine biosynthesis; L-valine from pyruvate: step 3/4. Functionally, functions in the biosynthesis of branched-chain amino acids. Catalyzes the dehydration of (2R,3R)-2,3-dihydroxy-3-methylpentanoate (2,3-dihydroxy-3-methylvalerate) into 2-oxo-3-methylpentanoate (2-oxo-3-methylvalerate) and of (2R)-2,3-dihydroxy-3-methylbutanoate (2,3-dihydroxyisovalerate) into 2-oxo-3-methylbutanoate (2-oxoisovalerate), the penultimate precursor to L-isoleucine and L-valine, respectively. The chain is Dihydroxy-acid dehydratase from Haemophilus influenzae (strain PittEE).